The primary structure comprises 437 residues: UDP-N-acetylmuramate--L-alanine ligase (437 aa).

108–114 serves as a coordination point for ATP; it reads GAHGKTS.

This sequence belongs to the MurCDEF family.

The protein resides in the cytoplasm. The catalysed reaction is UDP-N-acetyl-alpha-D-muramate + L-alanine + ATP = UDP-N-acetyl-alpha-D-muramoyl-L-alanine + ADP + phosphate + H(+). The protein operates within cell wall biogenesis; peptidoglycan biosynthesis. Its function is as follows. Cell wall formation. In Lysinibacillus sphaericus (strain C3-41), this protein is UDP-N-acetylmuramate--L-alanine ligase.